Here is a 251-residue protein sequence, read N- to C-terminus: 5'-nucleotidase SurE (251 aa).

A divalent metal cation contacts are provided by aspartate 8, aspartate 9, serine 39, and asparagine 95.

The protein belongs to the SurE nucleotidase family. A divalent metal cation serves as cofactor.

The protein resides in the cytoplasm. It catalyses the reaction a ribonucleoside 5'-phosphate + H2O = a ribonucleoside + phosphate. Nucleotidase that shows phosphatase activity on nucleoside 5'-monophosphates. This is 5'-nucleotidase SurE from Ralstonia nicotianae (strain ATCC BAA-1114 / GMI1000) (Ralstonia solanacearum).